We begin with the raw amino-acid sequence, 465 residues long: tRNA modification GTPase MnmE (465 aa).

(6S)-5-formyl-5,6,7,8-tetrahydrofolate contacts are provided by Arg-24, Glu-84, and Lys-127. Residues 223-383 (GLNIVLAGQP…LRGELLRLIG (161 aa)) enclose the TrmE-type G domain. Asn-233 lines the K(+) pocket. GTP is bound by residues 233-238 (NVGKSS), 252-258 (TAIAGTT), and 277-280 (DTAG). Ser-237 contributes to the Mg(2+) binding site. The K(+) site is built by Thr-252, Ile-254, and Thr-257. Thr-258 lines the Mg(2+) pocket. Position 465 (Lys-465) interacts with (6S)-5-formyl-5,6,7,8-tetrahydrofolate.

The protein belongs to the TRAFAC class TrmE-Era-EngA-EngB-Septin-like GTPase superfamily. TrmE GTPase family. Homodimer. Heterotetramer of two MnmE and two MnmG subunits. Requires K(+) as cofactor.

Its subcellular location is the cytoplasm. In terms of biological role, exhibits a very high intrinsic GTPase hydrolysis rate. Involved in the addition of a carboxymethylaminomethyl (cmnm) group at the wobble position (U34) of certain tRNAs, forming tRNA-cmnm(5)s(2)U34. The chain is tRNA modification GTPase MnmE from Janthinobacterium sp. (strain Marseille) (Minibacterium massiliensis).